A 259-amino-acid chain; its full sequence is Ribonuclease HII (259 aa).

In terms of domain architecture, RNase H type-2 spans 70 to 258; the sequence is TLIAGIDEVG…VKSLVLGKKE (189 aa). A divalent metal cation is bound by residues Asp76, Glu77, and Asp168.

Belongs to the RNase HII family. Mn(2+) serves as cofactor. The cofactor is Mg(2+).

The protein localises to the cytoplasm. The catalysed reaction is Endonucleolytic cleavage to 5'-phosphomonoester.. In terms of biological role, endonuclease that specifically degrades the RNA of RNA-DNA hybrids. This Streptococcus pneumoniae serotype 19F (strain G54) protein is Ribonuclease HII.